The primary structure comprises 259 residues: Global transcriptional regulator CodY (259 aa).

The tract at residues 1 to 155 (MDLLSKTRRI…GATVVGMEIL (155 aa)) is GAF domain. The H-T-H motif DNA-binding region spans 203 to 222 (ASKIADRVGITRSVIVNALR).

It belongs to the CodY family.

The protein localises to the cytoplasm. Functionally, DNA-binding global transcriptional regulator which is involved in the adaptive response to starvation and acts by directly or indirectly controlling the expression of numerous genes in response to nutrient availability. During rapid exponential growth, CodY is highly active and represses genes whose products allow adaptation to nutrient depletion. This chain is Global transcriptional regulator CodY, found in Brevibacillus brevis (strain 47 / JCM 6285 / NBRC 100599).